A 329-amino-acid polypeptide reads, in one-letter code: DNA-directed RNA polymerase subunit alpha (329 aa).

Residues 1–235 (MQGSVTEFLK…EQLDAFVDLR (235 aa)) form an alpha N-terminal domain (alpha-NTD) region. Residues 249–329 (FDPILLRPVD…NWPPASIAED (81 aa)) are alpha C-terminal domain (alpha-CTD).

Belongs to the RNA polymerase alpha chain family. As to quaternary structure, homodimer. The RNAP catalytic core consists of 2 alpha, 1 beta, 1 beta' and 1 omega subunit. When a sigma factor is associated with the core the holoenzyme is formed, which can initiate transcription.

The enzyme catalyses RNA(n) + a ribonucleoside 5'-triphosphate = RNA(n+1) + diphosphate. Its function is as follows. DNA-dependent RNA polymerase catalyzes the transcription of DNA into RNA using the four ribonucleoside triphosphates as substrates. This is DNA-directed RNA polymerase subunit alpha from Mannheimia succiniciproducens (strain KCTC 0769BP / MBEL55E).